The sequence spans 614 residues: Dihydroxy-acid dehydratase (614 aa).

Aspartate 81 is a Mg(2+) binding site. Cysteine 122 contacts [2Fe-2S] cluster. Aspartate 123 and lysine 124 together coordinate Mg(2+). Residue lysine 124 is modified to N6-carboxylysine. Residue cysteine 196 participates in [2Fe-2S] cluster binding. Residue glutamate 492 participates in Mg(2+) binding. Residue serine 518 is the Proton acceptor of the active site.

The protein belongs to the IlvD/Edd family. In terms of assembly, homodimer. It depends on [2Fe-2S] cluster as a cofactor. Mg(2+) serves as cofactor.

It carries out the reaction (2R)-2,3-dihydroxy-3-methylbutanoate = 3-methyl-2-oxobutanoate + H2O. The catalysed reaction is (2R,3R)-2,3-dihydroxy-3-methylpentanoate = (S)-3-methyl-2-oxopentanoate + H2O. It functions in the pathway amino-acid biosynthesis; L-isoleucine biosynthesis; L-isoleucine from 2-oxobutanoate: step 3/4. Its pathway is amino-acid biosynthesis; L-valine biosynthesis; L-valine from pyruvate: step 3/4. Functionally, functions in the biosynthesis of branched-chain amino acids. Catalyzes the dehydration of (2R,3R)-2,3-dihydroxy-3-methylpentanoate (2,3-dihydroxy-3-methylvalerate) into 2-oxo-3-methylpentanoate (2-oxo-3-methylvalerate) and of (2R)-2,3-dihydroxy-3-methylbutanoate (2,3-dihydroxyisovalerate) into 2-oxo-3-methylbutanoate (2-oxoisovalerate), the penultimate precursor to L-isoleucine and L-valine, respectively. This is Dihydroxy-acid dehydratase from Ruegeria sp. (strain TM1040) (Silicibacter sp.).